We begin with the raw amino-acid sequence, 378 residues long: Cyclic di-GMP phosphodiesterase response regulator RpfG (378 aa).

In terms of domain architecture, Response regulatory spans 29-147 (NIVIVDDQMS…ELRARCSNLL (119 aa)). Aspartate 80 bears the 4-aspartylphosphate mark. Residues 174 to 371 (VEERERETLS…LEQICGQFST (198 aa)) form the HD-GYP domain.

Interacts with a subset of GGDEF domain-containing proteins. Post-translationally, phosphorylated and activated by RpfC.

Its subcellular location is the cytoplasm. It carries out the reaction 3',3'-c-di-GMP + 2 H2O = 2 GMP + 2 H(+). In terms of biological role, member of the two-component regulatory system RpfG/RpfC, which is involved in the perception and response to the diffusible signaling factor (DSF), which is essential for cell-cell signaling. Detection of DSF leads to the positive regulation of biofilm dispersal and the production of virulence factors. Activated RpfG degrades cyclic di-GMP to GMP, leading to the activation of Clp, a global transcriptional regulator that regulates a large set of genes in DSF pathway. May also directly control genes involved in biofilm dispersal. The polypeptide is Cyclic di-GMP phosphodiesterase response regulator RpfG (rpfG) (Xanthomonas campestris pv. campestris (strain 8004)).